The following is a 53-amino-acid chain: Cytochrome c oxidase subunit 7e (53 aa).

Slime mold cytochrome c oxidase consists of at least seven different polypeptides species, subunits I, II, III, IV, V, VI, and VIIe/s in order of MW.

It is found in the mitochondrion inner membrane. It carries out the reaction 4 Fe(II)-[cytochrome c] + O2 + 8 H(+)(in) = 4 Fe(III)-[cytochrome c] + 2 H2O + 4 H(+)(out). This protein is one of the nuclear-coded polypeptide chains of cytochrome c oxidase, the terminal oxidase in mitochondrial electron transport. The sequence is that of Cytochrome c oxidase subunit 7e (cxgE) from Dictyostelium discoideum (Social amoeba).